Reading from the N-terminus, the 141-residue chain is Putative pre-16S rRNA nuclease (141 aa).

Belongs to the YqgF nuclease family.

The protein resides in the cytoplasm. In terms of biological role, could be a nuclease involved in processing of the 5'-end of pre-16S rRNA. The sequence is that of Putative pre-16S rRNA nuclease from Roseiflexus sp. (strain RS-1).